Here is a 423-residue protein sequence, read N- to C-terminus: Serine--tRNA ligase (423 aa).

Position 229-231 (229-231) interacts with L-serine; that stretch reads TAE. An ATP-binding site is contributed by 260 to 262; it reads RKE. Residue Glu-283 participates in L-serine binding. 347-350 contacts ATP; the sequence is EISS. Position 383 (Ser-383) interacts with L-serine.

It belongs to the class-II aminoacyl-tRNA synthetase family. Type-1 seryl-tRNA synthetase subfamily. Homodimer. The tRNA molecule binds across the dimer.

It is found in the cytoplasm. The catalysed reaction is tRNA(Ser) + L-serine + ATP = L-seryl-tRNA(Ser) + AMP + diphosphate + H(+). The enzyme catalyses tRNA(Sec) + L-serine + ATP = L-seryl-tRNA(Sec) + AMP + diphosphate + H(+). It functions in the pathway aminoacyl-tRNA biosynthesis; selenocysteinyl-tRNA(Sec) biosynthesis; L-seryl-tRNA(Sec) from L-serine and tRNA(Sec): step 1/1. Its function is as follows. Catalyzes the attachment of serine to tRNA(Ser). Is also able to aminoacylate tRNA(Sec) with serine, to form the misacylated tRNA L-seryl-tRNA(Sec), which will be further converted into selenocysteinyl-tRNA(Sec). The chain is Serine--tRNA ligase from Syntrophotalea carbinolica (strain DSM 2380 / NBRC 103641 / GraBd1) (Pelobacter carbinolicus).